Here is a 251-residue protein sequence, read N- to C-terminus: Triosephosphate isomerase (251 aa).

A substrate-binding site is contributed by 9–11 (NWK). His-95 functions as the Electrophile in the catalytic mechanism. Residue Glu-167 is the Proton acceptor of the active site. Residues Gly-173, Ser-213, and 234–235 (GG) each bind substrate. Position 213 is a phosphoserine (Ser-213).

It belongs to the triosephosphate isomerase family. In terms of assembly, homodimer.

Its subcellular location is the cytoplasm. The catalysed reaction is D-glyceraldehyde 3-phosphate = dihydroxyacetone phosphate. Its pathway is carbohydrate biosynthesis; gluconeogenesis. It functions in the pathway carbohydrate degradation; glycolysis; D-glyceraldehyde 3-phosphate from glycerone phosphate: step 1/1. Involved in the gluconeogenesis. Catalyzes stereospecifically the conversion of dihydroxyacetone phosphate (DHAP) to D-glyceraldehyde-3-phosphate (G3P). In Bacillus anthracis, this protein is Triosephosphate isomerase.